A 175-amino-acid polypeptide reads, in one-letter code: Zinc finger A20 and AN1 domain-containing stress-associated protein 7 (175 aa).

The A20-type zinc-finger motif lies at 13 to 47 (PTEPKLCDNGCGFFGSPSNMNLCSKCYRSLRAEED). 12 residues coordinate Zn(2+): cysteine 19, cysteine 23, cysteine 35, cysteine 38, cysteine 116, cysteine 119, cysteine 130, cysteine 132, cysteine 137, histidine 140, histidine 146, and cysteine 148. The AN1-type zinc finger occupies 110-156 (VRPNNRCFSCNKKVGVMGFKCKCGSTFCGSHRYPEKHECSFDFKEVG).

In terms of biological role, may be involved in environmental stress response. The sequence is that of Zinc finger A20 and AN1 domain-containing stress-associated protein 7 (SAP7) from Arabidopsis thaliana (Mouse-ear cress).